The primary structure comprises 100 residues: Large ribosomal subunit protein bL27 (100 aa).

Positions methionine 1–phenylalanine 9 are excised as a propeptide. The interval lysine 13–lysine 32 is disordered.

The protein belongs to the bacterial ribosomal protein bL27 family. Post-translationally, the N-terminus is cleaved by ribosomal processing cysteine protease Prp.

This is Large ribosomal subunit protein bL27 from Clostridium kluyveri (strain ATCC 8527 / DSM 555 / NBRC 12016 / NCIMB 10680 / K1).